The following is a 163-amino-acid chain: Small ribosomal subunit protein uS3m (163 aa).

The transit peptide at 1–31 directs the protein to the mitochondrion; it reads MAASLIRQTKLLSVFSSAGCFRSIHSTAACL.

The protein belongs to the universal ribosomal protein uS3 family. As to quaternary structure, component of the mitochondrial ribosome small subunit (28S) which comprises a 12S rRNA and about 30 distinct proteins.

It is found in the mitochondrion. This chain is Small ribosomal subunit protein uS3m (mrps24), found in Danio rerio (Zebrafish).